The primary structure comprises 655 residues: D-xylonate dehydratase YagF (655 aa).

It belongs to the IlvD/Edd family.

It carries out the reaction D-xylonate = 2-dehydro-3-deoxy-D-arabinonate + H2O. Functionally, catalyzes the dehydration of D-xylonic acid to form 2-dehydro-3-deoxy-D-pentonate. The sequence is that of D-xylonate dehydratase YagF (yagF) from Escherichia coli (strain K12).